Here is a 95-residue protein sequence, read N- to C-terminus: Aspartyl/glutamyl-tRNA(Asn/Gln) amidotransferase subunit C (95 aa).

It belongs to the GatC family. As to quaternary structure, heterotrimer of A, B and C subunits.

The enzyme catalyses L-glutamyl-tRNA(Gln) + L-glutamine + ATP + H2O = L-glutaminyl-tRNA(Gln) + L-glutamate + ADP + phosphate + H(+). The catalysed reaction is L-aspartyl-tRNA(Asn) + L-glutamine + ATP + H2O = L-asparaginyl-tRNA(Asn) + L-glutamate + ADP + phosphate + 2 H(+). Allows the formation of correctly charged Asn-tRNA(Asn) or Gln-tRNA(Gln) through the transamidation of misacylated Asp-tRNA(Asn) or Glu-tRNA(Gln) in organisms which lack either or both of asparaginyl-tRNA or glutaminyl-tRNA synthetases. The reaction takes place in the presence of glutamine and ATP through an activated phospho-Asp-tRNA(Asn) or phospho-Glu-tRNA(Gln). The polypeptide is Aspartyl/glutamyl-tRNA(Asn/Gln) amidotransferase subunit C (Chloroherpeton thalassium (strain ATCC 35110 / GB-78)).